The chain runs to 89 residues: Small ribosomal subunit protein uS15 (89 aa).

It belongs to the universal ribosomal protein uS15 family. Part of the 30S ribosomal subunit. Forms a bridge to the 50S subunit in the 70S ribosome, contacting the 23S rRNA.

In terms of biological role, one of the primary rRNA binding proteins, it binds directly to 16S rRNA where it helps nucleate assembly of the platform of the 30S subunit by binding and bridging several RNA helices of the 16S rRNA. Forms an intersubunit bridge (bridge B4) with the 23S rRNA of the 50S subunit in the ribosome. This chain is Small ribosomal subunit protein uS15, found in Janthinobacterium sp. (strain Marseille) (Minibacterium massiliensis).